The chain runs to 230 residues: uncharacterized protein (230 aa).

Transmembrane regions (helical) follow at residues 8-28, 45-65, 72-92, 109-129, 141-161, 176-196, and 203-223; these read SLIL…TMAF, SIIL…FIIF, LVLL…FLYL, PFSL…SVIS, IYVL…LLLA, MGIL…AIIF, and IYFL…LILF.

To P.aeruginosa PA0043 and M.thermoautotrophicum MTH1451.

It localises to the cell membrane. This is an uncharacterized protein from Aquifex aeolicus (strain VF5).